A 307-amino-acid chain; its full sequence is Homoserine O-acetyltransferase (307 aa).

Cys142 serves as the catalytic Acyl-thioester intermediate. Positions 163 and 192 each coordinate substrate. The active-site Proton acceptor is the His235. Glu237 is a catalytic residue. Substrate is bound at residue Arg249.

This sequence belongs to the MetA family.

It is found in the cytoplasm. The enzyme catalyses L-homoserine + acetyl-CoA = O-acetyl-L-homoserine + CoA. Its pathway is amino-acid biosynthesis; L-methionine biosynthesis via de novo pathway; O-acetyl-L-homoserine from L-homoserine: step 1/1. Functionally, transfers an acetyl group from acetyl-CoA to L-homoserine, forming acetyl-L-homoserine. In Desulfitobacterium hafniense (strain DSM 10664 / DCB-2), this protein is Homoserine O-acetyltransferase.